A 145-amino-acid polypeptide reads, in one-letter code: Hemoglobin subunit beta-2 (145 aa).

The region spanning 2 to 145 (HLTAEDRKEI…GVSHALGHGY (144 aa)) is the Globin domain. Heme b-binding residues include histidine 63 and histidine 92.

It belongs to the globin family. Minor hemoglobin is a tetramer of two alpha-2 chains and two beta-2 chains. In terms of tissue distribution, red blood cells.

Its function is as follows. Involved in oxygen transport from the lung to the various peripheral tissues. In Triturus cristatus (Great crested newt), this protein is Hemoglobin subunit beta-2 (HBB2).